A 326-amino-acid polypeptide reads, in one-letter code: Interleukin-1-binding protein (326 aa).

The first 18 residues, 1-18, serve as a signal peptide directing secretion; that stretch reads MSILPVIFLSIFFYSSFV. 3 Ig-like domains span residues 24 to 115, 122 to 212, and 221 to 322; these read PECI…LNLT, SNID…RIVK, and PSTM…KTVT. Cys-48 and Cys-99 are joined by a disulfide. Residues Asn-80, Asn-103, and Asn-113 are each glycosylated (N-linked (GlcNAc...) asparagine; by host). Cysteines 143 and 194 form a disulfide. N-linked (GlcNAc...) asparagine; by host glycans are attached at residues Asn-206 and Asn-237. Residues Cys-242 and Cys-309 are joined by a disulfide bond.

This sequence belongs to the interleukin-1 receptor family. As to quaternary structure, interacts with mouse Il1b.

It is found in the secreted. Its function is as follows. May reduce the host inflammatory response by interacting with inteleukin-1 beta (Il1b) and thus decreasing the association between IL1B and its cellular receptor. The polypeptide is Interleukin-1-binding protein (OPG201) (Vaccinia virus (strain Ankara) (VACV)).